Here is a 50-residue protein sequence, read N- to C-terminus: Alpha-conotoxin CnIG (50 aa).

A signal peptide spans 1–7 (LTTTVVS). Polar residues predominate over residues 1-13 (LTTTVVSFPSDSA). The tract at residues 1-26 (LTTTVVSFPSDSASDGRDNEAKDERS) is disordered. The propeptide occupies 8–35 (FPSDSASDGRDNEAKDERSDMYELKRNG). Over residues 14–26 (SDGRDNEAKDERS) the composition is skewed to basic and acidic residues. 2 disulfides stabilise this stretch: C37/C42 and C38/C48. C48 carries the cysteine amide modification.

This sequence belongs to the conotoxin A superfamily. Expressed by the venom duct.

It is found in the secreted. The chain is Alpha-conotoxin CnIG from Conus consors (Singed cone).